A 125-amino-acid chain; its full sequence is uncharacterized protein (125 aa).

Positions 15-121 constitute a PRD domain; the sequence is QINQSIIDVI…HSLVLEQKQL (107 aa).

This is an uncharacterized protein from Haemophilus influenzae (strain ATCC 51907 / DSM 11121 / KW20 / Rd).